Reading from the N-terminus, the 248-residue chain is 2,3-bisphosphoglycerate-dependent phosphoglycerate mutase (248 aa).

Residues 8 to 15, 21 to 22, Arg-60, 87 to 90, Lys-98, 114 to 115, and 183 to 184 contribute to the substrate site; these read RHGESEWN, TG, ERHY, RR, and GN. His-9 acts as the Tele-phosphohistidine intermediate in catalysis. The Proton donor/acceptor role is filled by Glu-87.

This sequence belongs to the phosphoglycerate mutase family. BPG-dependent PGAM subfamily.

The enzyme catalyses (2R)-2-phosphoglycerate = (2R)-3-phosphoglycerate. It functions in the pathway carbohydrate degradation; glycolysis; pyruvate from D-glyceraldehyde 3-phosphate: step 3/5. In terms of biological role, catalyzes the interconversion of 2-phosphoglycerate and 3-phosphoglycerate. In Borreliella afzelii (strain PKo) (Borrelia afzelii), this protein is 2,3-bisphosphoglycerate-dependent phosphoglycerate mutase.